A 408-amino-acid polypeptide reads, in one-letter code: WD repeat-containing protein JIP5 (408 aa).

WD repeat units lie at residues 5 to 44 (PVGS…DSHN), 50 to 86 (PSKR…TTDI), 87 to 130 (DARS…SVKT), 133 to 172 (QHFD…PKVV), 177 to 216 (DQED…GDCV), and 221 to 267 (GHPL…FLGV). The segment at 311-408 (VDSDEEEDDE…VIDKDFFDGL (98 aa)) is disordered. Acidic residues-rich tracts occupy residues 313–339 (SDEE…EDEE) and 356–366 (DESDDEDEEME). Residues 396-408 (KETVIDKDFFDGL) are compositionally biased toward basic and acidic residues.

This sequence belongs to the WD repeat WDR55 family.

Its subcellular location is the nucleus. The protein localises to the nucleolus. The sequence is that of WD repeat-containing protein JIP5 (JIP5) from Coprinopsis cinerea (strain Okayama-7 / 130 / ATCC MYA-4618 / FGSC 9003) (Inky cap fungus).